The sequence spans 287 residues: MTFTGQAYALGAGTVINAIATWKGAAFGVDLKTFADVELTKESSSFIGTIEGVPHGDTTLIERSMDLVLEHFGIEMGGTVVTRSEVPLASGLKSSSAAANATILATLDALGETLEPLDAVKMGVRAAKDAGVTITGAFDDACASFFGGIVVTDNRTNELVKRTEKEMDVVIFAPDRQSFSSQTNVHNSELLAPWVDMAYDLALDGEYEKAMTLNGFLYCGALGFSTDVMMEALKCGVKGVSLSGTGPAYSALVDRKMADTLTKVWENLGTSGKVINTKINNDGLTKL.

87-97 (PLASGLKSSSA) is a binding site for ATP.

This sequence belongs to the GHMP kinase family. Archaeal shikimate kinase subfamily.

The protein resides in the cytoplasm. The catalysed reaction is shikimate + ATP = 3-phosphoshikimate + ADP + H(+). It participates in metabolic intermediate biosynthesis; chorismate biosynthesis; chorismate from D-erythrose 4-phosphate and phosphoenolpyruvate: step 5/7. In Methanococcoides burtonii (strain DSM 6242 / NBRC 107633 / OCM 468 / ACE-M), this protein is Shikimate kinase.